A 364-amino-acid polypeptide reads, in one-letter code: Lysophosphatidic acid receptor 1 (364 aa).

The Extracellular portion of the chain corresponds to 1–50 (MAAISTSIPVISQPQFTAMNEPQCFYNESIAFFYNRSGKHLATEWNTVSK). 2 cysteine pairs are disulfide-bonded: cysteine 24-cysteine 190 and cysteine 188-cysteine 195. 2 N-linked (GlcNAc...) asparagine glycosylation sites follow: asparagine 27 and asparagine 35. Lysine 39 lines the a 1-acyl-sn-glycero-3-phosphate pocket. Residues 51–75 (LVMGLGITVCIFIMLANLLVMVAIY) form a helical membrane-spanning segment. Topologically, residues 76 to 83 (VNRRFHFP) are cytoplasmic. Residues 84–107 (IYYLMANLAAADFFAGLAYFYLMF) traverse the membrane as a helical segment. Topologically, residues 108 to 121 (NTGPNTRRLTVSTW) are extracellular. The helical transmembrane segment at 122 to 144 (LLRQGLIDTSLTASVANLLAIAI) threads the bilayer. 124–129 (RQGLID) contacts a 1-acyl-sn-glycero-3-phosphate. The Cytoplasmic portion of the chain corresponds to 145–163 (ERHITVFRMQLHTRMSNRR). A helical membrane pass occupies residues 164–184 (VVVVIVVIWTMAIVMGAIPSV). Over 185–204 (GWNCICDIENCSNMAPLYSD) the chain is Extracellular. A helical membrane pass occupies residues 205–225 (SYLVFWAIFNLVTFVVMVVLY). Residue tryptophan 210 coordinates a 1-acyl-sn-glycero-3-phosphate. Residues 226–255 (AHIFGYVRQRTMRMSRHSSGPRRNRDTMMS) are Cytoplasmic-facing. A helical membrane pass occupies residues 256–280 (LLKTVVIVLGAFIICWTPGLVLLLL). The Extracellular segment spans residues 281 to 294 (DVCCPQCDVLAYEK). Cysteine 284 and cysteine 287 are joined by a disulfide. Residues 295-315 (FFLLLAEFNSAMNPIIYSYRD) form a helical membrane-spanning segment. Residues 316–364 (KEMSATFRQILCCQRSENPTGPTEGSDRSASSLNHTILAGVHSNDHSVV) are Cytoplasmic-facing. Phosphoserine is present on serine 341. Threonine 351 carries the phosphothreonine modification.

Belongs to the G-protein coupled receptor 1 family. In terms of assembly, interacts with RALA and GRK2. Interacts with GNAQ and GNA13. Interacts with CD14; the interaction is enhanced by exposure to bacterial lipopolysaccharide (LPS). Post-translationally, N-glycosylated. As to expression, expressed in many adult organs, including brain, heart, colon, small intestine, placenta, prostate, ovary, pancreas, testes, spleen, skeletal muscle, and kidney. Little or no expression in liver, lung, thymus, or peripheral blood leukocytes. Detected in lung fibroblasts from bronchoalveolar fluid from patients with idiopathic pulmonary fibrosis. Detected in bone marrow-derived mesenchymal stem cells.

It localises to the cell surface. The protein resides in the cell membrane. It is found in the endosome. In terms of biological role, receptor for lysophosphatidic acid (LPA). Plays a role in the reorganization of the actin cytoskeleton, cell migration, differentiation and proliferation, and thereby contributes to the responses to tissue damage and infectious agents. Activates downstream signaling cascades via the G(i)/G(o), G(12)/G(13), and G(q) families of heteromeric G proteins. Signaling inhibits adenylyl cyclase activity and decreases cellular cAMP levels. Signaling triggers an increase of cytoplasmic Ca(2+) levels. Activates RALA; this leads to the activation of phospholipase C (PLC) and the formation of inositol 1,4,5-trisphosphate. Signaling mediates activation of down-stream MAP kinases. Contributes to the regulation of cell shape. Promotes Rho-dependent reorganization of the actin cytoskeleton in neuronal cells and neurite retraction. Promotes the activation of Rho and the formation of actin stress fibers. Promotes formation of lamellipodia at the leading edge of migrating cells via activation of RAC1. Through its function as LPA receptor, plays a role in chemotaxis and cell migration, including responses to injury and wounding. Plays a role in triggering inflammation in response to bacterial lipopolysaccharide (LPS) via its interaction with CD14. Promotes cell proliferation in response to LPA. Inhibits the intracellular ciliogenesis pathway in response to LPA and through AKT1 activation. Required for normal skeleton development. May play a role in osteoblast differentiation. Required for normal brain development. Required for normal proliferation, survival and maturation of newly formed neurons in the adult dentate gyrus. Plays a role in pain perception and in the initiation of neuropathic pain. The chain is Lysophosphatidic acid receptor 1 (LPAR1) from Homo sapiens (Human).